The sequence spans 266 residues: Undecaprenyl-diphosphatase (266 aa).

A run of 8 helical transmembrane segments spans residues 1 to 21, 39 to 59, 87 to 107, 111 to 131, 149 to 169, 183 to 203, 218 to 238, and 246 to 266; these read MDTF…FLPI, QGLS…VIYF, WWII…KDFI, LRSA…LWWA, ALLI…RSGA, AAAR…AILV, ALTL…HYFL, and MTPF…FIFL.

Belongs to the UppP family.

Its subcellular location is the cell inner membrane. It carries out the reaction di-trans,octa-cis-undecaprenyl diphosphate + H2O = di-trans,octa-cis-undecaprenyl phosphate + phosphate + H(+). Its function is as follows. Catalyzes the dephosphorylation of undecaprenyl diphosphate (UPP). Confers resistance to bacitracin. This Shewanella putrefaciens (strain CN-32 / ATCC BAA-453) protein is Undecaprenyl-diphosphatase.